The sequence spans 66 residues: Large ribosomal subunit protein bL31 (66 aa).

Positions 16, 18, 36, and 39 each coordinate Zn(2+).

The protein belongs to the bacterial ribosomal protein bL31 family. Type A subfamily. As to quaternary structure, part of the 50S ribosomal subunit. Requires Zn(2+) as cofactor.

In terms of biological role, binds the 23S rRNA. This Leptospira biflexa serovar Patoc (strain Patoc 1 / Ames) protein is Large ribosomal subunit protein bL31.